We begin with the raw amino-acid sequence, 165 residues long: Putative pre-16S rRNA nuclease (165 aa).

Belongs to the YqgF nuclease family.

It is found in the cytoplasm. Functionally, could be a nuclease involved in processing of the 5'-end of pre-16S rRNA. The chain is Putative pre-16S rRNA nuclease from Brucella anthropi (strain ATCC 49188 / DSM 6882 / CCUG 24695 / JCM 21032 / LMG 3331 / NBRC 15819 / NCTC 12168 / Alc 37) (Ochrobactrum anthropi).